The sequence spans 315 residues: MKKVVLIGTGNVGVTVVYTMITKGIDAEYVLIDINTEFAKGHAMDMSDAIALNSTTGSKIRTGTYADAKGADLLIVAAGRPQKQGETRLEMIADNSKIMKDIALEIKKSGFNGFTIVISNPVDILATVFQKVTNFPKEKVMSSGTFLDTSRFRKFLSEKTGVPTNSVHGFVIGEHGDKSVVVFSRMQIGFSRLDDFLKSKALTEDDLKWISEKTYKEAYEIINRKRSTYFGIGASVAEMAESVLYNQRRIFPIGIYLDESKPGGGIYISRPAILGENGWEEVKNYDLSPAEQKAFDESAINLKKHWDDVQKEISF.

NAD(+) is bound by residues V12, D33, and Y65. Substrate-binding positions include Q82, R88, and 120 to 123 (NPVD). NAD(+) is bound by residues 118-120 (ISN) and S143. 148-151 (DTSR) contacts substrate. Residues R153 and H168 each contribute to the beta-D-fructose 1,6-bisphosphate site. H175 functions as the Proton acceptor in the catalytic mechanism. Y219 bears the Phosphotyrosine mark. Residue T228 participates in substrate binding.

Belongs to the LDH/MDH superfamily. LDH family. In terms of assembly, homotetramer.

Its subcellular location is the cytoplasm. The catalysed reaction is (S)-lactate + NAD(+) = pyruvate + NADH + H(+). The protein operates within fermentation; pyruvate fermentation to lactate; (S)-lactate from pyruvate: step 1/1. With respect to regulation, allosterically activated by fructose 1,6-bisphosphate (FBP). Catalyzes the conversion of lactate to pyruvate. In Mycoplasmopsis pulmonis (strain UAB CTIP) (Mycoplasma pulmonis), this protein is L-lactate dehydrogenase.